The following is a 274-amino-acid chain: Nitrogenase iron protein (274 aa).

8 to 15 (GKGGIGKS) lines the ATP pocket. Residue C94 coordinates [4Fe-4S] cluster. The residue at position 97 (R97) is an ADP-ribosylarginine; by dinitrogenase reductase ADP-ribosyltransferase. Position 131 (C131) interacts with [4Fe-4S] cluster.

This sequence belongs to the NifH/BchL/ChlL family. As to quaternary structure, homodimer. [4Fe-4S] cluster serves as cofactor. Post-translationally, the reversible ADP-ribosylation of Arg-97 inactivates the nitrogenase reductase and regulates nitrogenase activity.

It carries out the reaction N2 + 8 reduced [2Fe-2S]-[ferredoxin] + 16 ATP + 16 H2O = H2 + 8 oxidized [2Fe-2S]-[ferredoxin] + 2 NH4(+) + 16 ADP + 16 phosphate + 6 H(+). Functionally, the key enzymatic reactions in nitrogen fixation are catalyzed by the nitrogenase complex, which has 2 components: the iron protein and the molybdenum-iron protein. This is Nitrogenase iron protein from Chlorobaculum parvum (strain DSM 263 / NCIMB 8327) (Chlorobium vibrioforme subsp. thiosulfatophilum).